We begin with the raw amino-acid sequence, 769 residues long: Major inner protein P1 (769 aa).

Homodimer. Associates with the polymerase complex.

The protein resides in the virion. In terms of biological role, P1 is the major inner capsid (core) protein of the polyhedral procapsid, which is responsible for genomic replication and transcription. Forms a dodecahedral shell from 60 asymmetric dimers. Binds to RNA and may be involved in genomic packaging. In Pseudomonas phage phi6 (Bacteriophage phi-6), this protein is Major inner protein P1 (P1).